Reading from the N-terminus, the 215-residue chain is Ras-related protein Rab-5B (215 aa).

An N-acetylthreonine modification is found at Thr2. 10 residues coordinate GTP: Ser29, Ala30, Gly32, Lys33, Ser34, Ser35, His46, Glu47, Thr52, and Gly78. Position 34 (Ser34) interacts with Mg(2+). 2 consecutive short sequence motifs (switch) follow at residues Gln44–Ala56 and Ala77–Ala93. Residue Thr52 participates in Mg(2+) binding. Ser84 is modified (phosphoserine; by LRRK2). 5 residues coordinate GTP: Asn133, Lys134, Asp136, Ala164, and Lys165. The interval Pro186–Asn215 is disordered. Residues Gln204 to Asn215 are compositionally biased toward low complexity. 2 S-geranylgeranyl cysteine lipidation sites follow: Cys212 and Cys213.

Belongs to the small GTPase superfamily. Rab family. As to quaternary structure, binds EEA1. Interacts with RIN2 and RIN3, which probably regulate its pathway, possibly by acting as GEFs. Interacts with GDI1, GDI2, CHML and CHM; phosphorylation at Ser-84 disrupts this interaction. The cofactor is Mg(2+). In terms of processing, phosphorylation of Ser-84 in the switch II region by LRRK2 prevents the association of RAB regulatory proteins, including CHM, CHML and RAB GDP dissociation inhibitors GDI1 and GDI2. Post-translationally, (Microbial infection) Glycosylated on arginine residues by S.typhimurium protein Ssek3.

It is found in the cell membrane. It localises to the early endosome membrane. Its subcellular location is the melanosome. It carries out the reaction GTP + H2O = GDP + phosphate + H(+). With respect to regulation, regulated by guanine nucleotide exchange factors (GEFs) which promote the exchange of bound GDP for free GTP. Regulated by GTPase activating proteins (GAPs) which increase the GTP hydrolysis activity. Inhibited by GDP dissociation inhibitors (GDIs). In terms of biological role, the small GTPases Rab are key regulators of intracellular membrane trafficking, from the formation of transport vesicles to their fusion with membranes. Rabs cycle between an inactive GDP-bound form and an active GTP-bound form that is able to recruit to membranes different sets of downstream effectors directly responsible for vesicle formation, movement, tethering and fusion. This Homo sapiens (Human) protein is Ras-related protein Rab-5B.